Consider the following 341-residue polypeptide: UDP-3-O-(3-hydroxymyristoyl)glucosamine N-acyltransferase (341 aa).

Residue H239 is the Proton acceptor of the active site.

It belongs to the transferase hexapeptide repeat family. LpxD subfamily. As to quaternary structure, homotrimer.

It carries out the reaction a UDP-3-O-[(3R)-3-hydroxyacyl]-alpha-D-glucosamine + a (3R)-hydroxyacyl-[ACP] = a UDP-2-N,3-O-bis[(3R)-3-hydroxyacyl]-alpha-D-glucosamine + holo-[ACP] + H(+). The catalysed reaction is UDP-3-O-[(3R)-3-hydroxytetradecanoyl]-alpha-D-glucosamine + (3R)-hydroxytetradecanoyl-[ACP] = UDP-2-N,3-O-bis[(3R)-3-hydroxytetradecanoyl]-alpha-D-glucosamine + holo-[ACP] + H(+). It functions in the pathway glycolipid biosynthesis; lipid IV(A) biosynthesis; lipid IV(A) from (3R)-3-hydroxytetradecanoyl-[acyl-carrier-protein] and UDP-N-acetyl-alpha-D-glucosamine: step 3/6. Catalyzes the N-acylation of UDP-3-O-(hydroxytetradecanoyl)glucosamine using 3-hydroxytetradecanoyl-ACP as the acyl donor. Is involved in the biosynthesis of lipid A, a phosphorylated glycolipid that anchors the lipopolysaccharide to the outer membrane of the cell. This chain is UDP-3-O-(3-hydroxymyristoyl)glucosamine N-acyltransferase, found in Shigella dysenteriae serotype 1 (strain Sd197).